A 121-amino-acid polypeptide reads, in one-letter code: MAKITKEQFIESLKEMTIKEVMEFVDALKEEFGVDPSAVAVAATPVATEEVKTEVKLTLKAAGQQKVAVIKVVKDLLGLSLMDAKKLVDAAPSVLKEAIKPEEAEEYKAKLVAAGAEVSID.

Belongs to the bacterial ribosomal protein bL12 family. Homodimer. Part of the ribosomal stalk of the 50S ribosomal subunit. Forms a multimeric L10(L12)X complex, where L10 forms an elongated spine to which 2 to 4 L12 dimers bind in a sequential fashion. Binds GTP-bound translation factors.

Functionally, forms part of the ribosomal stalk which helps the ribosome interact with GTP-bound translation factors. Is thus essential for accurate translation. This chain is Large ribosomal subunit protein bL12, found in Mesomycoplasma hyopneumoniae (strain 232) (Mycoplasma hyopneumoniae).